We begin with the raw amino-acid sequence, 256 residues long: Tyrosine-protein kinase-interacting protein (256 aa).

A compositionally biased stretch (acidic residues) spans 1-14; it reads MANEGEEIELTEFP. A disordered region spans residues 1 to 49; that stretch reads MANEGEEIELTEFPETEKERKDEEKLSSCSEETTNTSSSSGSDHVPVPI. The Cytoplasmic segment spans residues 1-228; that stretch reads MANEGEEIEL…DLKRLENKIN (228 aa). Residues 15–26 are compositionally biased toward basic and acidic residues; that stretch reads ETEKERKDEEKL. Residues 27-42 are compositionally biased toward low complexity; sequence SSCSEETTNTSSSSGS. Y114 is subject to Phosphotyrosine; by host LCK. Phosphotyrosine; by host is present on Y127. The interval 146–155 is CSKH/LBD2; the sequence is EDLQSFLEKY. The tract at residues 162–183 is disordered; that stretch reads PKRDLSATWDPGMPTPPLPPRP. The segment at 174–183 is SH3B/LBD1; it reads MPTPPLPPRP. Residues 174–183 show a composition bias toward pro residues; sequence MPTPPLPPRP. The chain crosses the membrane as a helical span at residues 229 to 249; that stretch reads VIICLVVVILAVLLLVTVLSI. The Extracellular segment spans residues 250-256; it reads LHIGMKS.

As to quaternary structure, binds host LCK, human WDR48 and human NXF1/TAP. Forms a complex with activated LCK and STAT1 and STAT3. Phosphorylation on Tyr-114 acts as a docking site for the recruitment of STATs 1 and 3.

It is found in the host cell membrane. Its function is as follows. Plays a critical role in virus induced T-cell transformation. Binds to T-cell-specific tyrosine kinase LCK SH2 and SH3 domains, thereby activating its kinase activity. Once phosphorylated by host LCK, forms a complex with at least STAT 1 and 3, resulting on the phosphorylation of STAT3 and presumably STAT1, and their migration into the nucleus to induce transcription of target genes. Stimulates host ILF3/NF-AT-90 activity. Association with host NXF1/TAP transduces the signal up-regulating surface expression of adhesion molecules as well as activating NF-kappa-B activity. Acts synergistically with StpC to stimulate NF-kappa-B activity and interleukin-2 gene expression. Activation of NF-kappa-B protects lymphocytes from apoptosis, thereby facilitating viral induced cell transformation. May cause down-regulation of host LCK and cell apoptosis when stably overexpressed ex vivo. Interaction with WDR48 induce degradation of T-cell receptor in a lysosome-dependent fashion, when both proteins are overexpressed. The biological effect of this interaction remains controversial since no T-cell receptor degradation is observed in infected cells. The polypeptide is Tyrosine-protein kinase-interacting protein (Saimiri sciureus (Common squirrel monkey)).